A 171-amino-acid polypeptide reads, in one-letter code: NADH-quinone oxidoreductase subunit I (171 aa).

4Fe-4S ferredoxin-type domains follow at residues 41–71 (LTRDPDGEERCVACNLCAAVCPVDCIALQKT) and 81–110 (EFFRINFSRCILCGLCEEACPTYAIQLTPD). Positions 51, 54, 57, 61, 90, 93, 96, and 100 each coordinate [4Fe-4S] cluster.

It belongs to the complex I 23 kDa subunit family. As to quaternary structure, NDH-1 is composed of 14 different subunits. Subunits NuoA, H, J, K, L, M, N constitute the membrane sector of the complex. It depends on [4Fe-4S] cluster as a cofactor.

The protein resides in the cell inner membrane. The enzyme catalyses a quinone + NADH + 5 H(+)(in) = a quinol + NAD(+) + 4 H(+)(out). In terms of biological role, NDH-1 shuttles electrons from NADH, via FMN and iron-sulfur (Fe-S) centers, to quinones in the respiratory chain. The immediate electron acceptor for the enzyme in this species is believed to be ubiquinone. Couples the redox reaction to proton translocation (for every two electrons transferred, four hydrogen ions are translocated across the cytoplasmic membrane), and thus conserves the redox energy in a proton gradient. The polypeptide is NADH-quinone oxidoreductase subunit I (Methylococcus capsulatus (strain ATCC 33009 / NCIMB 11132 / Bath)).